The following is a 340-amino-acid chain: GTPase Obg (340 aa).

The Obg domain occupies 1–159; sequence MRFIDKAKIH…RWIELELKLI (159 aa). The region spanning 160 to 331 is the OBG-type G domain; it reads ADIGIIGFPN…LIKLIAEVYE (172 aa). Residues 166–173, 191–195, 213–216, 283–286, and 312–314 contribute to the GTP site; these read GFPNAGKS, FTTLT, DIPG, NKID, and SLV. Positions 173 and 193 each coordinate Mg(2+).

The protein belongs to the TRAFAC class OBG-HflX-like GTPase superfamily. OBG GTPase family. As to quaternary structure, monomer. Mg(2+) is required as a cofactor.

It is found in the cytoplasm. In terms of biological role, an essential GTPase which binds GTP, GDP and possibly (p)ppGpp with moderate affinity, with high nucleotide exchange rates and a fairly low GTP hydrolysis rate. Plays a role in control of the cell cycle, stress response, ribosome biogenesis and in those bacteria that undergo differentiation, in morphogenesis control. The polypeptide is GTPase Obg (Persephonella marina (strain DSM 14350 / EX-H1)).